A 313-amino-acid polypeptide reads, in one-letter code: Probable cell division protein WhiA (313 aa).

A DNA-binding region (H-T-H motif) is located at residues 277-311 (SLKEVAAQVPDGPISKSGVNHRFQKIREIAKQLKE).

The protein belongs to the WhiA family.

Functionally, involved in cell division and chromosome segregation. The sequence is that of Probable cell division protein WhiA from Lactobacillus johnsonii (strain CNCM I-12250 / La1 / NCC 533).